A 1056-amino-acid polypeptide reads, in one-letter code: Carbamoyl phosphate synthase large chain (1056 aa).

Residues 1–398 form a carboxyphosphate synthetic domain region; sequence MPRDPSIKKV…AFLKALRSLD (398 aa). Residues Arg127, Arg167, Gly173, Gly174, Glu206, Val208, Glu213, Gly239, Val240, His241, Gln282, and Glu295 each contribute to the ATP site. Residues 131 to 324 form the ATP-grasp 1 domain; that stretch reads RDLMNRIGEP…IARVASKIAI (194 aa). Residues Gln282, Glu295, and Asn297 each coordinate Mg(2+). Positions 282, 295, and 297 each coordinate Mn(2+). Residues 399–532 form an oligomerization domain region; sequence TDVEHHTVLS…STYGDKVCEV (134 aa). The carbamoyl phosphate synthetic domain stretch occupies residues 533–921; that stretch reads THSDRKKVMI…YKASIAAHNR (389 aa). The region spanning 663–854 is the ATP-grasp 2 domain; it reads SVLLDSLSIP…LAKIAARVMM (192 aa). ATP is bound by residues Arg699, Arg738, Leu740, Glu745, Gly770, Val771, His772, Ser773, Gln813, and Glu825. Mg(2+) contacts are provided by Gln813, Glu825, and Asn827. Residues Gln813, Glu825, and Asn827 each contribute to the Mn(2+) site. The MGS-like domain maps to 920-1056; sequence NRLPKSGNVF…IEPLQHYIGR (137 aa). Residues 922-1056 form an allosteric domain region; the sequence is LPKSGNVFIS…IEPLQHYIGR (135 aa).

Belongs to the CarB family. Composed of two chains; the small (or glutamine) chain promotes the hydrolysis of glutamine to ammonia, which is used by the large (or ammonia) chain to synthesize carbamoyl phosphate. Tetramer of heterodimers (alpha,beta)4. Mg(2+) is required as a cofactor. The cofactor is Mn(2+).

The catalysed reaction is hydrogencarbonate + L-glutamine + 2 ATP + H2O = carbamoyl phosphate + L-glutamate + 2 ADP + phosphate + 2 H(+). It catalyses the reaction hydrogencarbonate + NH4(+) + 2 ATP = carbamoyl phosphate + 2 ADP + phosphate + 2 H(+). Its pathway is amino-acid biosynthesis; L-arginine biosynthesis; carbamoyl phosphate from bicarbonate: step 1/1. The protein operates within pyrimidine metabolism; UMP biosynthesis via de novo pathway; (S)-dihydroorotate from bicarbonate: step 1/3. Its function is as follows. Large subunit of the glutamine-dependent carbamoyl phosphate synthetase (CPSase). CPSase catalyzes the formation of carbamoyl phosphate from the ammonia moiety of glutamine, carbonate, and phosphate donated by ATP, constituting the first step of 2 biosynthetic pathways, one leading to arginine and/or urea and the other to pyrimidine nucleotides. The large subunit (synthetase) binds the substrates ammonia (free or transferred from glutamine from the small subunit), hydrogencarbonate and ATP and carries out an ATP-coupled ligase reaction, activating hydrogencarbonate by forming carboxy phosphate which reacts with ammonia to form carbamoyl phosphate. The protein is Carbamoyl phosphate synthase large chain of Methanospirillum hungatei JF-1 (strain ATCC 27890 / DSM 864 / NBRC 100397 / JF-1).